The primary structure comprises 119 residues: Cytochrome c55X (119 aa).

The first 20 residues, 1–20, serve as a signal peptide directing secretion; that stretch reads MNAPPDFRRAASHALWLALA. The heme c site is built by Cys51, Cys54, and His55.

In terms of processing, binds 1 heme c group covalently per subunit.

It localises to the periplasm. In terms of biological role, monoheme c-type cytochrome. The polypeptide is Cytochrome c55X (nirC) (Pseudomonas aeruginosa (strain ATCC 15692 / DSM 22644 / CIP 104116 / JCM 14847 / LMG 12228 / 1C / PRS 101 / PAO1)).